The sequence spans 362 residues: MVRSLIRRVLGRQDVGVSNAPLELPPSDSRERARAMVMGLQDQICAGLEALDGEGRFVEESWVRHEGGGGRSRVMREGRVFEQGGVNFSEVQGEELPPSILKQRPEAKGHPWFATGTSMVLHPRNPYIPTVHLNYRYFEAGPVWWFGGGADLTPYYPFLDDARHFHRTHQAACDSVHPDLHKVFKPWCDEYFYLKHRGETRGVGGIFYDYQDANGTLYKGQDPSGPAAQVSASLGARPLSWEQLFSLGQANGRAFLPAYAPIVEKRHPMAYGDRERDFQLYRRGRYVEFNLVWDRGTIFGLQTNGRTESILMSLPPLVRWEYGYTAEAGSREALLTELFTKPQDWLGDASLDERCRPHGAIN.

S118 contributes to the substrate binding site. Residues H122 and H132 each contribute to the a divalent metal cation site. The active-site Proton donor is the H132. A substrate-binding site is contributed by 134–136 (NYR). A divalent metal cation is bound by residues H166 and H196. An important for dimerization region spans residues 286-321 (YVEFNLVWDRGTIFGLQTNGRTESILMSLPPLVRWE).

It belongs to the aerobic coproporphyrinogen-III oxidase family. Homodimer. The cofactor is a divalent metal cation.

Its subcellular location is the cytoplasm. It catalyses the reaction coproporphyrinogen III + O2 + 2 H(+) = protoporphyrinogen IX + 2 CO2 + 2 H2O. Its pathway is porphyrin-containing compound metabolism; protoporphyrin-IX biosynthesis; protoporphyrinogen-IX from coproporphyrinogen-III (O2 route): step 1/1. Functionally, involved in the heme and chlorophyll biosynthesis. Catalyzes the aerobic oxidative decarboxylation of propionate groups of rings A and B of coproporphyrinogen-III to yield the vinyl groups in protoporphyrinogen-IX. The protein is Oxygen-dependent coproporphyrinogen-III oxidase of Synechococcus sp. (strain CC9605).